A 151-amino-acid chain; its full sequence is Deoxyuridine 5'-triphosphate nucleotidohydrolase (151 aa).

Substrate contacts are provided by residues 69-71 (RSG), Asn82, and 86-88 (TID).

This sequence belongs to the dUTPase family. Mg(2+) is required as a cofactor.

It catalyses the reaction dUTP + H2O = dUMP + diphosphate + H(+). It functions in the pathway pyrimidine metabolism; dUMP biosynthesis; dUMP from dCTP (dUTP route): step 2/2. In terms of biological role, this enzyme is involved in nucleotide metabolism: it produces dUMP, the immediate precursor of thymidine nucleotides and it decreases the intracellular concentration of dUTP so that uracil cannot be incorporated into DNA. The sequence is that of Deoxyuridine 5'-triphosphate nucleotidohydrolase from Rhodospirillum centenum (strain ATCC 51521 / SW).